A 470-amino-acid chain; its full sequence is Glutamate--tRNA ligase 2 (470 aa).

The short motif at 10 to 20 (PSPTGFLHIGS) is the 'HIGH' region element. Positions 239–243 (KLSKR) match the 'KMSKS' region motif. ATP is bound at residue Lys242.

The protein belongs to the class-I aminoacyl-tRNA synthetase family. Glutamate--tRNA ligase type 1 subfamily. In terms of assembly, monomer.

Its subcellular location is the cytoplasm. The catalysed reaction is tRNA(Glu) + L-glutamate + ATP = L-glutamyl-tRNA(Glu) + AMP + diphosphate. In terms of biological role, catalyzes the attachment of glutamate to tRNA(Glu) in a two-step reaction: glutamate is first activated by ATP to form Glu-AMP and then transferred to the acceptor end of tRNA(Glu). This chain is Glutamate--tRNA ligase 2, found in Rickettsia prowazekii (strain Madrid E).